We begin with the raw amino-acid sequence, 311 residues long: Aspartate carbamoyltransferase catalytic subunit (311 aa).

The carbamoyl phosphate site is built by arginine 58 and threonine 59. Residue lysine 86 participates in L-aspartate binding. The carbamoyl phosphate site is built by arginine 108, histidine 136, and glutamine 139. Positions 169 and 224 each coordinate L-aspartate. The carbamoyl phosphate site is built by glycine 265 and proline 266.

The protein belongs to the aspartate/ornithine carbamoyltransferase superfamily. ATCase family. Heterododecamer (2C3:3R2) of six catalytic PyrB chains organized as two trimers (C3), and six regulatory PyrI chains organized as three dimers (R2).

The enzyme catalyses carbamoyl phosphate + L-aspartate = N-carbamoyl-L-aspartate + phosphate + H(+). The protein operates within pyrimidine metabolism; UMP biosynthesis via de novo pathway; (S)-dihydroorotate from bicarbonate: step 2/3. Catalyzes the condensation of carbamoyl phosphate and aspartate to form carbamoyl aspartate and inorganic phosphate, the committed step in the de novo pyrimidine nucleotide biosynthesis pathway. The sequence is that of Aspartate carbamoyltransferase catalytic subunit from Geobacter sulfurreducens (strain ATCC 51573 / DSM 12127 / PCA).